The chain runs to 316 residues: MNTSITARELFDQQRDKLALRWVAGQKGEHREIQAGSNNARRPSLAGYLNVIYPNKVQILGTEELAWLDSLDARQRWETIEKIIQVQPLALAISKNQSCPEDLRAAADESNTPLWISPKRGHELLNHLSYHLARTLAPRVTLHGVFMEIYSIGVLITGEAGSGKSELALELLSRGHRLVADDAPEFTQIAPDVLDGTCPELLQDLLEVRGLGVLNVRDMFGDTAVKKNKYLRLIVHLTRPMTEPTPSGYERLTGDSGSRHVLDLDVPLITLPVMPGRNLAVLTEAATRLHILRTKGIDPAAMFIARHSNLLERRTP.

Catalysis depends on residues histidine 143 and lysine 164. 158-165 (GEAGSGKS) contributes to the ATP binding site. Mg(2+) is bound at residue serine 165. Catalysis depends on aspartate 182, which acts as the Proton acceptor; for phosphorylation activity. Proton donor; for dephosphorylation activity. The tract at residues 206-215 (LEVRGLGVLN) is important for the catalytic mechanism of both phosphorylation and dephosphorylation. Residue glutamate 207 coordinates Mg(2+). Arginine 251 is a catalytic residue. The important for the catalytic mechanism of dephosphorylation stretch occupies residues 272–277 (PVMPGR).

It belongs to the HPrK/P family. As to quaternary structure, homohexamer. The cofactor is Mg(2+).

The enzyme catalyses [HPr protein]-L-serine + ATP = [HPr protein]-O-phospho-L-serine + ADP + H(+). It carries out the reaction [HPr protein]-O-phospho-L-serine + phosphate + H(+) = [HPr protein]-L-serine + diphosphate. Functionally, catalyzes the ATP- as well as the pyrophosphate-dependent phosphorylation of a specific serine residue in HPr, a phosphocarrier protein of the phosphoenolpyruvate-dependent sugar phosphotransferase system (PTS). HprK/P also catalyzes the pyrophosphate-producing, inorganic phosphate-dependent dephosphorylation (phosphorolysis) of seryl-phosphorylated HPr (P-Ser-HPr). In Xanthomonas campestris pv. campestris (strain 8004), this protein is HPr kinase/phosphorylase.